A 395-amino-acid polypeptide reads, in one-letter code: 8-amino-7-oxononanoate synthase (395 aa).

K24 provides a ligand contact to substrate. 111 to 112 (GF) is a binding site for pyridoxal 5'-phosphate. H136 provides a ligand contact to substrate. Residues S184, 209–212 (DDAH), and 240–243 (TLSK) contribute to the pyridoxal 5'-phosphate site. Residue K243 is modified to N6-(pyridoxal phosphate)lysine. Residue T357 participates in substrate binding.

The protein belongs to the class-II pyridoxal-phosphate-dependent aminotransferase family. BioF subfamily. In terms of assembly, homodimer. Pyridoxal 5'-phosphate is required as a cofactor.

It catalyses the reaction 6-carboxyhexanoyl-[ACP] + L-alanine + H(+) = (8S)-8-amino-7-oxononanoate + holo-[ACP] + CO2. It participates in cofactor biosynthesis; biotin biosynthesis. Catalyzes the decarboxylative condensation of pimeloyl-[acyl-carrier protein] and L-alanine to produce 8-amino-7-oxononanoate (AON), [acyl-carrier protein], and carbon dioxide. This chain is 8-amino-7-oxononanoate synthase, found in Treponema denticola (strain ATCC 35405 / DSM 14222 / CIP 103919 / JCM 8153 / KCTC 15104).